The chain runs to 675 residues: Potassium-transporting ATPase ATP-binding subunit 2 (675 aa).

4 helical membrane passes run 34 to 54 (IMFV…FPDI), 65 to 85 (LITI…SEAF), 216 to 236 (IALF…IVTL), and 245 to 265 (LILP…TTIG). The active-site 4-aspartylphosphate intermediate is D304. Residues D341, E345, 372–379 (FTAETRMS), and K390 contribute to the ATP site. Mg(2+) contacts are provided by D513 and D517. The next 3 membrane-spanning stretches (helical) occupy residues 569–591 (ALTT…ALMM), 611–631 (AIIS…PIAM), and 644–664 (IFIN…FLGI).

Belongs to the cation transport ATPase (P-type) (TC 3.A.3) family. Type IA subfamily. The system is composed of three essential subunits: KdpA, KdpB and KdpC.

It localises to the cell membrane. The enzyme catalyses K(+)(out) + ATP + H2O = K(+)(in) + ADP + phosphate + H(+). In terms of biological role, part of the high-affinity ATP-driven potassium transport (or Kdp) system, which catalyzes the hydrolysis of ATP coupled with the electrogenic transport of potassium into the cytoplasm. This subunit is responsible for energy coupling to the transport system and for the release of the potassium ions to the cytoplasm. The chain is Potassium-transporting ATPase ATP-binding subunit 2 from Staphylococcus aureus (strain MRSA252).